The chain runs to 839 residues: Taste receptor type 1 member 2 (839 aa).

An N-terminal signal peptide occupies residues 1–19 (MRPRATTICSLFFLLRVLA). Topologically, residues 20-566 (EPAKNSDFYL…AFLEWHEAPT (547 aa)) are extracellular. Asparagine 84, asparagine 127, asparagine 248, asparagine 292, asparagine 312, asparagine 368, asparagine 428, asparagine 487, and asparagine 527 each carry an N-linked (GlcNAc...) asparagine glycan. Residues 567–587 (IVVALLAALGFLSTLAILVIF) form a helical membrane-spanning segment. Over 588-602 (WRHFQTPMVRSAGGP) the chain is Cytoplasmic. Residues 603–623 (MCFLMLTLLLVAYMVVPVYVG) form a helical membrane-spanning segment. Over 624–635 (PPKVSTCFCRQA) the chain is Extracellular. Residues 636 to 656 (LFPLCFTICISCIAVRSFQIV) traverse the membrane as a helical segment. Residues 657–681 (CVFKMASRFPRAYSYWVRYQGPYVS) are Cytoplasmic-facing. The helical transmembrane segment at 682–702 (MAFITVLKMVTVVIGMLATGL) threads the bilayer. Over 703-727 (NPTTRIDPDDPKIMIVSCNPNYRNS) the chain is Extracellular. A helical membrane pass occupies residues 728–748 (LFFNTGLDLLLSVVGFSFAYM). The Cytoplasmic segment spans residues 749 to 760 (GKELPTNYNEAK). Residues 761–781 (FITLSMTFYFTSSVSLCTFMS) form a helical membrane-spanning segment. Residues 782–784 (AYN) lie on the Extracellular side of the membrane. Residues 785–805 (GVLVTIMDLLVTVLNLLAISL) traverse the membrane as a helical segment. Over 806–839 (GYFGPKCYMILFYPERNTPAYFNSMIQGYTMRRD) the chain is Cytoplasmic.

It belongs to the G-protein coupled receptor 3 family. TAS1R subfamily. Forms heterodimers with TAS1R3.

It localises to the cell membrane. Putative taste receptor. TAS1R2/TAS1R3 recognizes diverse natural and synthetic sweeteners. The polypeptide is Taste receptor type 1 member 2 (TAS1R2) (Macaca mulatta (Rhesus macaque)).